Consider the following 650-residue polypeptide: Acetyl-coenzyme A synthetase (650 aa).

Residues 191-194, Thr-311, and Asn-335 contribute to the CoA site; that span reads RGGR. Residues 387–389, 411–416, Asp-500, and Arg-515 contribute to the ATP site; these read GEP and DTWWQT. Ser-523 contributes to the CoA binding site. Arg-526 provides a ligand contact to ATP. Positions 537, 539, and 542 each coordinate Mg(2+). Arg-584 contacts CoA. At Lys-609 the chain carries N6-acetyllysine.

It belongs to the ATP-dependent AMP-binding enzyme family. Requires Mg(2+) as cofactor. In terms of processing, acetylated. Deacetylation by the SIR2-homolog deacetylase activates the enzyme.

The catalysed reaction is acetate + ATP + CoA = acetyl-CoA + AMP + diphosphate. Catalyzes the conversion of acetate into acetyl-CoA (AcCoA), an essential intermediate at the junction of anabolic and catabolic pathways. AcsA undergoes a two-step reaction. In the first half reaction, AcsA combines acetate with ATP to form acetyl-adenylate (AcAMP) intermediate. In the second half reaction, it can then transfer the acetyl group from AcAMP to the sulfhydryl group of CoA, forming the product AcCoA. In Shewanella sp. (strain W3-18-1), this protein is Acetyl-coenzyme A synthetase.